The sequence spans 225 residues: Insulin-induced gene 2 protein (225 aa).

At 1 to 28 the chain is on the cytoplasmic side; sequence MAENDAKPTLPKKSGPYISSVTSHGMNL. A helical transmembrane segment spans residues 29–51; it reads VIRGIVLFFIGVFLALVLNLLQI. The Lumenal portion of the chain corresponds to 52–70; it reads QRNVTLFPPDVITSIFSSA. Residues 71–88 traverse the membrane as a helical segment; sequence WWVPPCCGTASAVIGLLY. Over 89-103 the chain is Cytoplasmic; sequence PCMDRHLGEPHKFKR. Residues 104 to 126 traverse the membrane as a helical segment; sequence EWSSVMRCVAVFVGINHASAKVD. Residues 127–129 lie on the Lumenal side of the membrane; that stretch reads FAN. A helical membrane pass occupies residues 130–148; sequence NIQLSLTLAALSIGLWWTF. Over 149–153 the chain is Cytoplasmic; it reads DRSRS. A helical membrane pass occupies residues 154-175; sequence GFGLGVGIAFLATLVSQLLVYN. Over 176–189 the chain is Lumenal; it reads GVYQYTSPDFLYVR. Residues 190 to 207 form a helical membrane-spanning segment; the sequence is SWLPCIFFAGGITMGNIG. The Cytoplasmic portion of the chain corresponds to 208-225; sequence RQLAMYECKVIAEKSHED. Residues 219-225 carry the KxHxx motif; it reads AEKSHED.

The protein belongs to the INSIG family. Interacts with SCAP; interaction is direct and only takes place in the presence of sterols; it prevents interaction between SCAP and the coat protein complex II (COPII). Associates with the SCAP-SREBP complex; association is mediated via its interaction with SCAP and only takes place in the presence of sterols.

The protein resides in the endoplasmic reticulum membrane. Functionally, oxysterol-binding protein that mediates feedback control of cholesterol synthesis by controlling both endoplasmic reticulum to Golgi transport of SCAP and degradation of HMGCR. Acts as a negative regulator of cholesterol biosynthesis by mediating the retention of the SCAP-SREBP complex in the endoplasmic reticulum, thereby blocking the processing of sterol regulatory element-binding proteins (SREBPs). Binds oxysterol, including 22-hydroxycholesterol, 24-hydroxycholesterol, 25-hydroxycholesterol and 27-hydroxycholesterol, regulating interaction with SCAP and retention of the SCAP-SREBP complex in the endoplasmic reticulum. In presence of oxysterol, interacts with SCAP, retaining the SCAP-SREBP complex in the endoplasmic reticulum, thereby preventing SCAP from escorting SREBPs to the Golgi. Sterol deprivation reduces oxysterol-binding, disrupting the interaction between INSIG2 and SCAP, thereby promoting Golgi transport of the SCAP-SREBP complex, followed by processing and nuclear translocation of SREBPs. Also regulates cholesterol synthesis by regulating degradation of HMGCR. The protein is Insulin-induced gene 2 protein of Gallus gallus (Chicken).